The chain runs to 548 residues: LDL receptor repeat-containing protein egg-2 (548 aa).

Residues 1–49 are Cytoplasmic-facing; it reads MSQQAGNAQRGRFDEEPMSLGEKISHRMDQLKEIVSSSCPCAGKFPPVA. A helical; Signal-anchor for type II membrane protein membrane pass occupies residues 50–70; sequence IVLIVALIILGVIIAVPLVIF. The Extracellular segment spans residues 71 to 548; that stretch reads LSPSAQAMSS…LALKNSGLRP (478 aa). N-linked (GlcNAc...) asparagine glycosylation occurs at Asn-119. 8 LDL-receptor class A domains span residues 122–160, 161–213, 215–252, 253–288, 291–328, 370–412, 416–454, and 455–492; these read TCSG…ENCK, ECQS…ASCR, KCSK…SNCN, KCQK…HQCD, TCSG…ENCP, KCDP…KKCT, ECVV…KGCD, and KCPS…HKCS. Cystine bridges form between Cys-130/Cys-150, Cys-144/Cys-159, Cys-162/Cys-190, Cys-168/Cys-203, Cys-197/Cys-212, Cys-216/Cys-229, Cys-223/Cys-242, Cys-236/Cys-251, Cys-254/Cys-265, Cys-261/Cys-278, Cys-272/Cys-287, Cys-292/Cys-305, Cys-300/Cys-318, Cys-312/Cys-327, Cys-371/Cys-389, Cys-379/Cys-402, Cys-396/Cys-411, Cys-417/Cys-431, Cys-427/Cys-444, Cys-438/Cys-453, Cys-456/Cys-469, Cys-463/Cys-482, and Cys-476/Cys-491. The N-linked (GlcNAc...) asparagine glycan is linked to Asn-244. Residue Asn-527 is glycosylated (N-linked (GlcNAc...) asparagine).

It is found in the cell membrane. Its subcellular location is the endosome membrane. In terms of biological role, probable receptor which is required for the oocyte-to-zygote transition although its exact function is controversial. Redundantly with egg-1, seems to be required for fertilization probably by promoting the interaction or fusion between sperm and oocyte. Conversely, shown to be dispensable for fertilization but required together with egg-1 for the formation of a continuous and cohesive eggshell chitin layer by maintaining a homogenous distribution of chitin synthase chs-1 at the unfertilized oocyte cell membrane. Appears to recruit or maintain together to the unfertilized oocyte cortex several proteins including chs-1, kinase mbk-2 and pseudophosphatase egg-3, and possibly egg-4 and egg-5. The protein is LDL receptor repeat-containing protein egg-2 of Caenorhabditis elegans.